The primary structure comprises 537 residues: Mitochondria-eating protein (537 aa).

The interval 1–273 is interaction with YWHAG/14-3-3 protein gamma; that stretch reads MADNLRRLVS…PCSRSHSRSR (273 aa). 4 positions are modified to phosphoserine: serine 85, serine 127, serine 154, and serine 157. Residues 115–253 are a coiled coil; sequence GTRDIQQLDA…SAEKSVLQGR (139 aa). 2 disordered regions span residues 171 to 221 and 249 to 293; these read QLKS…ANQR and VLQG…AKLS. The segment covering 179–217 has biased composition (basic and acidic residues); that stretch reads EESRHRNSDRRRSEKRGSERRRVELRGSEQRVSDLDRRS. Low complexity predominate over residues 253 to 287; it reads RSARSRSPSPAPCSRSHSRSRSTSPSSAKARTPSP. Serine 286 and serine 508 each carry phosphoserine.

Belongs to the MIEAP family. In terms of assembly, interacts (via coiled-coil domains) with BNIP3L (via BH3 domain). Interacts (via coiled-coil domains) with BNIP3 (via BH3 domain). Interacts with YWHAG/14-3-3 protein gamma; a protein that also plays a role in MALM.

Its subcellular location is the cytoplasm. The protein localises to the cytosol. It is found in the mitochondrion outer membrane. It localises to the mitochondrion matrix. Functionally, key regulator of mitochondrial quality that mediates the repairing or degradation of unhealthy mitochondria in response to mitochondrial damage. Mediator of mitochondrial protein catabolic process (also named MALM) by mediating the degradation of damaged proteins inside mitochondria by promoting the accumulation in the mitochondrial matrix of hydrolases that are characteristic of the lysosomal lumen. Also involved in mitochondrion degradation of damaged mitochondria by promoting the formation of vacuole-like structures (named MIV), which engulf and degrade unhealthy mitochondria by accumulating lysosomes. The physical interaction of SPATA18/MIEAP, BNIP3 and BNIP3L/NIX at the mitochondrial outer membrane regulates the opening of a pore in the mitochondrial double membrane in order to mediate the translocation of lysosomal proteins from the cytoplasm to the mitochondrial matrix. Binds cardiolipin. May form molecular condensates (non-membrane-bounded organelles) within mitochondria that compartmentalize and promote cardiolipin metabolism. The protein is Mitochondria-eating protein (SPATA18) of Bos taurus (Bovine).